The following is a 406-amino-acid chain: Tyrosine--tRNA ligase (406 aa).

Tyr-35 is an L-tyrosine binding site. A 'HIGH' region motif is present at residues 40–49; it reads ATSTSLHIGH. Positions 166 and 170 each coordinate L-tyrosine. Residues 226–230 carry the 'KMSKS' region motif; it reads KMGKS. ATP is bound at residue Lys-229. In terms of domain architecture, S4 RNA-binding spans 341–405; it reads ILLIDLMVLS…IGKKRILRVI (65 aa).

It belongs to the class-I aminoacyl-tRNA synthetase family. TyrS type 1 subfamily. Homodimer.

Its subcellular location is the cytoplasm. The catalysed reaction is tRNA(Tyr) + L-tyrosine + ATP = L-tyrosyl-tRNA(Tyr) + AMP + diphosphate + H(+). Its function is as follows. Catalyzes the attachment of tyrosine to tRNA(Tyr) in a two-step reaction: tyrosine is first activated by ATP to form Tyr-AMP and then transferred to the acceptor end of tRNA(Tyr). This Borrelia turicatae (strain 91E135) protein is Tyrosine--tRNA ligase.